The sequence spans 277 residues: Large ribosomal subunit protein uL2 (277 aa).

A disordered region spans residues 222-277; the sequence is GSVMNPNDHPHGGGEGKAPVGRKAPSTPWGKPALGLKTRNKKAKSDKLIVRRRNQK.

Belongs to the universal ribosomal protein uL2 family. As to quaternary structure, part of the 50S ribosomal subunit. Forms a bridge to the 30S subunit in the 70S ribosome.

Functionally, one of the primary rRNA binding proteins. Required for association of the 30S and 50S subunits to form the 70S ribosome, for tRNA binding and peptide bond formation. It has been suggested to have peptidyltransferase activity; this is somewhat controversial. Makes several contacts with the 16S rRNA in the 70S ribosome. The polypeptide is Large ribosomal subunit protein uL2 (Streptococcus agalactiae serotype Ia (strain ATCC 27591 / A909 / CDC SS700)).